The sequence spans 489 residues: Glutamyl-tRNA(Gln) amidotransferase subunit A (489 aa).

Catalysis depends on charge relay system residues Lys77 and Ser152. The Acyl-ester intermediate role is filled by Ser176.

Belongs to the amidase family. GatA subfamily. As to quaternary structure, heterotrimer of A, B and C subunits.

The enzyme catalyses L-glutamyl-tRNA(Gln) + L-glutamine + ATP + H2O = L-glutaminyl-tRNA(Gln) + L-glutamate + ADP + phosphate + H(+). Functionally, allows the formation of correctly charged Gln-tRNA(Gln) through the transamidation of misacylated Glu-tRNA(Gln) in organisms which lack glutaminyl-tRNA synthetase. The reaction takes place in the presence of glutamine and ATP through an activated gamma-phospho-Glu-tRNA(Gln). The protein is Glutamyl-tRNA(Gln) amidotransferase subunit A of Protochlamydia amoebophila (strain UWE25).